The sequence spans 256 residues: MLHTTQIRMVGTGSAFSKKFYNNSALVTFTNGYNLLIDCGHSVPKGLHDADIPLESIDGILITHTHADHIGGLEEVALYNKFVLGGRKIDLLVPNTLVESLWENSLKGGLRYSDTYDDLSLSDYFTVRSLKTFTSGAARTQLEENIAIKLYPTFHVSHMASYAVGLEDRGEDKVFYSSDTIFDEYLIDYALTYSWVFHDCQFFTGGVHASLDELLNYIPEEDQDRVFLMHYGDNMEDFFTKTGRMRFALQGRTYIL.

The interval 21 to 230 (YNNSALVTFT…EDQDRVFLMH (210 aa)) is beta-lactamase-like. Positions 64, 66, 68, and 69 each coordinate Zn(2+). Residues E74 and Y112 contribute to the active site. Zn(2+) contacts are provided by H155, D179, and H230.

Belongs to the anti-Pycsar protein Apyc1 family. In terms of assembly, homodimer. It depends on Zn(2+) as a cofactor.

It carries out the reaction 3',5'-cyclic CMP + H2O = CMP + H(+). The catalysed reaction is 3',5'-cyclic UMP + H2O = UMP + H(+). In terms of biological role, counteracts the host Pycsar antiviral defense system. Phosphodiesterase that enables metal-dependent hydrolysis of host cyclic nucleotide Pycsar defense signals such as cCMP and cUMP. This Bacillus phage BSP38 protein is Anti-Pycsar protein Apyc1.